The primary structure comprises 5085 residues: Linear gramicidin synthase subunit D (5085 aa).

4 consecutive Carrier domains span residues 962 to 1037, 2023 to 2097, 3544 to 3619, and 4601 to 4676; these read APRT…AAAG, SPST…EEKA, APRN…ELLT, and APQT…EEII. Residues S997, S2058, S3579, and S4636 each carry the O-(pantetheine 4'-phosphoryl)serine modification.

The protein belongs to the ATP-dependent AMP-binding enzyme family. In terms of assembly, large multienzyme complex composed of 4 subunits; LgrA, LgrB, LgrC and LgrD. The cofactor is pantetheine 4'-phosphate.

Its function is as follows. Activates the 13th to the 16th (Trp, D-Leu, Trp and Gly) amino acids in linear gramicidin and catalyzes the formation of the peptide bond between them. This enzyme is also responsible for the epimerization of the 14th (D-Leu) amino acid. It also catalyzes the NAD(P)H-dependent reduction of the C-terminal glycine residue of the N-formylated 16-mer peptide, that binds to the peptidyl carrier domain of the terminal module of this protein, to form a peptidyl-aldehyde intermediate that is released from the enzyme complex. This is Linear gramicidin synthase subunit D (lgrD) from Brevibacillus parabrevis.